The chain runs to 208 residues: Large ribosomal subunit protein uL4 (208 aa).

The interval arginine 45–histidine 95 is disordered. The span at glycine 69–serine 80 shows a compositional bias: polar residues.

The protein belongs to the universal ribosomal protein uL4 family. As to quaternary structure, part of the 50S ribosomal subunit.

Its function is as follows. One of the primary rRNA binding proteins, this protein initially binds near the 5'-end of the 23S rRNA. It is important during the early stages of 50S assembly. It makes multiple contacts with different domains of the 23S rRNA in the assembled 50S subunit and ribosome. In terms of biological role, forms part of the polypeptide exit tunnel. This is Large ribosomal subunit protein uL4 from Chlorobium chlorochromatii (strain CaD3).